Consider the following 156-residue polypeptide: Enhancer of split M1 protein (156 aa).

An N-terminal signal peptide occupies residues 1-19 (MMSQTLTLCCLALVACVYG). 2 consecutive Kazal-like domains span residues 23 to 81 (STND…AWCS) and 96 to 156 (KLEV…EEKC). Cystine bridges form between Cys-29–Cys-62, Cys-33–Cys-55, Cys-102–Cys-135, Cys-106–Cys-128, and Cys-114–Cys-156.

The sequence is that of Enhancer of split M1 protein (Kaz-m1) from Drosophila melanogaster (Fruit fly).